Reading from the N-terminus, the 761-residue chain is DNA topoisomerase 1 (761 aa).

Residues 6–143 form the Toprim domain; that stretch reads TALIICEKPS…KRMRFSSLTK (138 aa). Positions 12 and 111 each coordinate Mg(2+). Residues 157 to 569 form the Topo IA-type catalytic domain; that stretch reads DYGLVDAGES…EAEKRLRKIL (413 aa). An interaction with DNA region spans residues 196-201; that stretch reads SVGRVQ. The O-(5'-phospho-DNA)-tyrosine intermediate role is filled by Y315. 3 consecutive C4-type zinc fingers follow at residues 600 to 626, 680 to 706, and 721 to 747; these read CPKC…YPEC and CPKC…YPKC.

This sequence belongs to the type IA topoisomerase family. Monomer. Requires Mg(2+) as cofactor.

The catalysed reaction is ATP-independent breakage of single-stranded DNA, followed by passage and rejoining.. Its function is as follows. Releases the supercoiling and torsional tension of DNA, which is introduced during the DNA replication and transcription, by transiently cleaving and rejoining one strand of the DNA duplex. Introduces a single-strand break via transesterification at a target site in duplex DNA. The scissile phosphodiester is attacked by the catalytic tyrosine of the enzyme, resulting in the formation of a DNA-(5'-phosphotyrosyl)-enzyme intermediate and the expulsion of a 3'-OH DNA strand. The free DNA strand then undergoes passage around the unbroken strand, thus removing DNA supercoils. Finally, in the religation step, the DNA 3'-OH attacks the covalent intermediate to expel the active-site tyrosine and restore the DNA phosphodiester backbone. This chain is DNA topoisomerase 1, found in Methanocaldococcus jannaschii (strain ATCC 43067 / DSM 2661 / JAL-1 / JCM 10045 / NBRC 100440) (Methanococcus jannaschii).